Consider the following 267-residue polypeptide: MEMO1 family protein MA_0601 (267 aa).

The protein belongs to the MEMO1 family.

This chain is MEMO1 family protein MA_0601, found in Methanosarcina acetivorans (strain ATCC 35395 / DSM 2834 / JCM 12185 / C2A).